We begin with the raw amino-acid sequence, 149 residues long: Nucleoside diphosphate kinase (149 aa).

ATP-binding residues include Lys-9, Phe-57, Arg-85, Thr-91, Arg-102, and Asn-112. Residue His-115 is the Pros-phosphohistidine intermediate of the active site.

This sequence belongs to the NDK family. Homotetramer. Mg(2+) is required as a cofactor.

The protein localises to the cytoplasm. The catalysed reaction is a 2'-deoxyribonucleoside 5'-diphosphate + ATP = a 2'-deoxyribonucleoside 5'-triphosphate + ADP. It catalyses the reaction a ribonucleoside 5'-diphosphate + ATP = a ribonucleoside 5'-triphosphate + ADP. Major role in the synthesis of nucleoside triphosphates other than ATP. The ATP gamma phosphate is transferred to the NDP beta phosphate via a ping-pong mechanism, using a phosphorylated active-site intermediate. The protein is Nucleoside diphosphate kinase of Roseiflexus castenholzii (strain DSM 13941 / HLO8).